We begin with the raw amino-acid sequence, 329 residues long: MTWQSSLQLHFDCASNAAKTRLYHRAHTGALMVQRALYPEPDSTDSSQAGICHIYVLYPPAGIADDDRLTLEFDLHSNSHAVITTPGAGKWYGQRKSLRYSRPSDSSKFTNGTQSANSNTSNDCFNDVVSAEQHIDARLDDHAVLEWLPQESIYYDHSVSTANNRFYLAKTASLLTWDIAVFGRQAYQETFANGHYANRLEIWRESDLLVSECTAQQANTRWFTSPLGLNDQHVHGSFWAIPSTEVIAPELQNNPLKLGQYLDATITEIRNLIDTQSLPIHCTHNFQGINCRYLGADVRACFEAFYQIRELIRSKWYKLEPHRPRIWDT.

The segment at 100 to 120 is disordered; sequence YSRPSDSSKFTNGTQSANSNT. Residues 103-120 are compositionally biased toward polar residues; it reads PSDSSKFTNGTQSANSNT.

Belongs to the UreD family. In terms of assembly, ureD, UreF and UreG form a complex that acts as a GTP-hydrolysis-dependent molecular chaperone, activating the urease apoprotein by helping to assemble the nickel containing metallocenter of UreC. The UreE protein probably delivers the nickel.

The protein resides in the cytoplasm. Functionally, required for maturation of urease via the functional incorporation of the urease nickel metallocenter. The chain is Urease accessory protein UreD 2 from Psychrobacter cryohalolentis (strain ATCC BAA-1226 / DSM 17306 / VKM B-2378 / K5).